We begin with the raw amino-acid sequence, 389 residues long: Pregnancy-associated glycoprotein 1 (389 aa).

A signal peptide spans 1-15 (MKWLVILGLVALSEC). The Peptidase A1 domain occupies 76–386 (YVGNITIGTP…DRGQNRIGLR (311 aa)). Asn79 carries N-linked (GlcNAc...) asparagine glycosylation. Residue Asp94 is part of the active site. Residues Cys107 and Cys112 are joined by a disulfide bond. Asn130 is a glycosylation site (N-linked (GlcNAc...) asparagine). The cysteines at positions 268 and 272 are disulfide-linked. Residue Asp277 is part of the active site. A disulfide bridge links Cys311 with Cys345. Asn348 is a glycosylation site (N-linked (GlcNAc...) asparagine).

Belongs to the peptidase A1 family. As to expression, expressed throughout the chorion, with the signal localized exclusively over the trophectoderm.

It is found in the secreted. The protein resides in the extracellular space. Appears to be proteolytically inactive. This is Pregnancy-associated glycoprotein 1 from Sus scrofa (Pig).